The following is a 188-amino-acid chain: Ion-translocating oxidoreductase complex subunit B (188 aa).

Residues 1-26 (MNGVFLAIGALLPICLAGGALLGYAA) form a hydrophobic region. The 4Fe-4S domain maps to 32 to 90 (QGDPVAEQVNALLPQTQCGQCGYPGCKPYAEAIAAGDKINKCPPGGEATIRALADLLDL). Positions 49, 52, 57, 73, 113, 116, 119, 123, 143, 146, 149, and 153 each coordinate [4Fe-4S] cluster. 4Fe-4S ferredoxin-type domains lie at 104-133 (RVAY…GAAR) and 134-163 (LMHT…MRET).

This sequence belongs to the 4Fe4S bacterial-type ferredoxin family. RnfB subfamily. The complex is composed of six subunits: RnfA, RnfB, RnfC, RnfD, RnfE and RnfG. [4Fe-4S] cluster is required as a cofactor.

Its subcellular location is the cell inner membrane. Functionally, part of a membrane-bound complex that couples electron transfer with translocation of ions across the membrane. The chain is Ion-translocating oxidoreductase complex subunit B from Pseudomonas aeruginosa (strain UCBPP-PA14).